A 315-amino-acid chain; its full sequence is Acetyl-coenzyme A carboxylase carboxyl transferase subunit alpha (315 aa).

The CoA carboxyltransferase C-terminal domain occupies 39–293 (RLQDKSSTLT…RADLIEQLDM (255 aa)).

Belongs to the AccA family. As to quaternary structure, acetyl-CoA carboxylase is a heterohexamer composed of biotin carboxyl carrier protein (AccB), biotin carboxylase (AccC) and two subunits each of ACCase subunit alpha (AccA) and ACCase subunit beta (AccD).

The protein localises to the cytoplasm. The catalysed reaction is N(6)-carboxybiotinyl-L-lysyl-[protein] + acetyl-CoA = N(6)-biotinyl-L-lysyl-[protein] + malonyl-CoA. It functions in the pathway lipid metabolism; malonyl-CoA biosynthesis; malonyl-CoA from acetyl-CoA: step 1/1. Component of the acetyl coenzyme A carboxylase (ACC) complex. First, biotin carboxylase catalyzes the carboxylation of biotin on its carrier protein (BCCP) and then the CO(2) group is transferred by the carboxyltransferase to acetyl-CoA to form malonyl-CoA. The chain is Acetyl-coenzyme A carboxylase carboxyl transferase subunit alpha from Pseudomonas entomophila (strain L48).